The chain runs to 342 residues: MKQERTSKVKGLIKVIALVVPFLLNVNAFASPAESAGVTHDSIAAVARTEGAHAGEAPHGEAAGHGEEKAGDVIMHHILDSNVYSFEPFGEIVLPKIVVGGFDISITKHVVTLWVVSAIVLIVFTIIGSKYKTMSPKTAPKGFVNAMEALVEFIRLDVAKANIGPGYEKYLPYLLTVFMFVLLCNVLGLVPYGATATGNINVTLTLATFTFVLTQIAALKAHGIKGYLAHLTGGTHPALWIIMIPIEFIGLFTKPVALTIRLFANMTAGHIVILSLIFISFILKSYIVAVAMSVPFSIFIYLLEIFVAFLQAYIFTMLSALFIGLASAHEEHADHEAGAAHH.

A run of 8 helical transmembrane segments spans residues 11–31 (GLIK…AFAS), 109–129 (HVVT…IIGS), 170–190 (YLPY…LGLV), 199–219 (NINV…IAAL), 238–258 (ALWI…PVAL), 262–282 (LFAN…ISFI), 287–307 (IVAV…EIFV), and 308–328 (AFLQ…LASA).

This sequence belongs to the ATPase A chain family. In terms of assembly, F-type ATPases have 2 components, CF(1) - the catalytic core - and CF(0) - the membrane proton channel. CF(1) has five subunits: alpha(3), beta(3), gamma(1), delta(1), epsilon(1). CF(0) has four main subunits: a, b, b' and c.

Its subcellular location is the cell inner membrane. Functionally, key component of the proton channel; it plays a direct role in the translocation of protons across the membrane. This Chlorobium phaeobacteroides (strain DSM 266 / SMG 266 / 2430) protein is ATP synthase subunit a.